We begin with the raw amino-acid sequence, 67 residues long: Medusin-S1 (67 aa).

Positions 1–22 (MSFLKKSLFLVLFLGFVSLSIC) are cleaved as a signal peptide. The propeptide occupies 23–48 (EEEKRETEEKENEQEDDREERSEEKR). Positions 26–47 (KRETEEKENEQEDDREERSEEK) are disordered. Residues 31–40 (EKENEQEDDR) show a composition bias toward acidic residues. The residue at position 66 (Leu-66) is a Leucine amide.

Belongs to the frog skin active peptide (FSAP) family. Medusin subfamily. Expressed by the skin glands.

The protein localises to the secreted. Its subcellular location is the target cell membrane. In terms of biological role, antibacterial peptide with moderate activity against the Gram-positive bacteria (S.aureus ATCC 25923, MIC=25 uM), but not against all other bacteria (both Gram-positive and Gram-negative) tested. Does not show activity against fungi, and against Leishmania species. It adopts an alpha-helical structure with very low amphipathicity in membrane environments. The sequence is that of Medusin-S1 from Phyllomedusa sauvagei (Sauvage's leaf frog).